The following is a 365-amino-acid chain: Ribosome biogenesis regulatory protein homolog (365 aa).

Met-1 bears the N-acetylmethionine mark. Ser-5 carries the phosphoserine modification. Glycyl lysine isopeptide (Lys-Gly) (interchain with G-Cter in SUMO2) cross-links involve residues Lys-154 and Lys-226. Residues 200-255 (QMPSSAGLHPTGHQSKEELGRAMQVAKVSTASVGRFQERLPKEKAPRGSGKKRKFQ) form a disordered region. A compositionally biased stretch (basic and acidic residues) spans 235–245 (FQERLPKEKAP). A Glycyl lysine isopeptide (Lys-Gly) (interchain with G-Cter in SUMO2) cross-link involves residue Lys-266. A disordered region spans residues 272–365 (LRVMNSKKPQ…VPHHGGKRRK (94 aa)). Residue Arg-273 is modified to Citrulline. 2 stretches are compositionally biased toward basic residues: residues 302–325 (KRRK…RRKG) and 340–365 (GKKH…KRRK).

This sequence belongs to the RRS1 family. As to quaternary structure, component of a hexameric 5S RNP precursor complex, composed of 5S RNA, RRS1, RPF2/BXDC1, RPL5, RPL11 and HEATR3; this complex acts as a precursor for ribosome assembly. Post-translationally, citrullinated by PADI4.

It localises to the nucleus. Its subcellular location is the nucleolus. Functionally, involved in ribosomal large subunit assembly. May regulate the localization of the 5S RNP/5S ribonucleoprotein particle to the nucleolus. The sequence is that of Ribosome biogenesis regulatory protein homolog (Rrs1) from Rattus norvegicus (Rat).